Consider the following 632-residue polypeptide: tRNA uridine 5-carboxymethylaminomethyl modification enzyme MnmG (632 aa).

Residues Gly15–Gly20, Ile127, and Ser182 contribute to the FAD site. Position 276-290 (Gly276–Phe290) interacts with NAD(+). Gln373 contacts FAD.

This sequence belongs to the MnmG family. Homodimer. Heterotetramer of two MnmE and two MnmG subunits. FAD serves as cofactor.

It is found in the cytoplasm. NAD-binding protein involved in the addition of a carboxymethylaminomethyl (cmnm) group at the wobble position (U34) of certain tRNAs, forming tRNA-cmnm(5)s(2)U34. The chain is tRNA uridine 5-carboxymethylaminomethyl modification enzyme MnmG from Streptococcus pyogenes serotype M6 (strain ATCC BAA-946 / MGAS10394).